Here is a 301-residue protein sequence, read N- to C-terminus: E3 ubiquitin-protein ligase DIS1 (301 aa).

Residues 53-89 (CPVCLSAMYPPIHQCSNGHTLCSGCKPRVHNRCPTCR) form an RING-type; degenerate zinc finger. The segment at 106 to 166 (SLELPCKYQN…LVNHLKDDHK (61 aa)) adopts an SIAH-type; degenerate zinc-finger fold.

Belongs to the SINA (Seven in absentia) family. In terms of assembly, homodimer. Interacts with NEK6. Interacts with SKIPA.

It is found in the nucleus. Its subcellular location is the cytoplasm. It catalyses the reaction S-ubiquitinyl-[E2 ubiquitin-conjugating enzyme]-L-cysteine + [acceptor protein]-L-lysine = [E2 ubiquitin-conjugating enzyme]-L-cysteine + N(6)-ubiquitinyl-[acceptor protein]-L-lysine.. Its pathway is protein modification; protein ubiquitination. Functionally, E3 ubiquitin-protein ligase that mediates ubiquitination and subsequent proteasomal degradation of target proteins. E3 ubiquitin ligases accept ubiquitin from an E2 ubiquitin-conjugating enzyme in the form of a thioester and then directly transfers the ubiquitin to targeted substrates. Plays a negative role in drought stress tolerance through transcriptional and post-translational regulation of diverse stress-related genes. Interacts with the serine/threonine-protein kinase NEK6 and promotes its degradation via the 26S proteasome-dependent pathway. The polypeptide is E3 ubiquitin-protein ligase DIS1 (Oryza sativa subsp. japonica (Rice)).